Consider the following 217-residue polypeptide: Probable transaldolase (217 aa).

The Schiff-base intermediate with substrate role is filled by Lys-83.

Belongs to the transaldolase family. Type 3B subfamily.

The protein resides in the cytoplasm. The enzyme catalyses D-sedoheptulose 7-phosphate + D-glyceraldehyde 3-phosphate = D-erythrose 4-phosphate + beta-D-fructose 6-phosphate. The protein operates within carbohydrate degradation; pentose phosphate pathway; D-glyceraldehyde 3-phosphate and beta-D-fructose 6-phosphate from D-ribose 5-phosphate and D-xylulose 5-phosphate (non-oxidative stage): step 2/3. In terms of biological role, transaldolase is important for the balance of metabolites in the pentose-phosphate pathway. The polypeptide is Probable transaldolase (Bartonella tribocorum (strain CIP 105476 / IBS 506)).